The primary structure comprises 709 residues: Polyribonucleotide nucleotidyltransferase (709 aa).

Residues D491 and D497 each contribute to the Mg(2+) site. Positions 557–617 (PKSESFMIPP…ENLQKAKTFI (61 aa)) constitute a KH domain. Residues 641-709 (GERFVGKIKK…KNKVELGLVE (69 aa)) form the S1 motif domain.

Belongs to the polyribonucleotide nucleotidyltransferase family. Requires Mg(2+) as cofactor.

It is found in the cytoplasm. The catalysed reaction is RNA(n+1) + phosphate = RNA(n) + a ribonucleoside 5'-diphosphate. Functionally, involved in mRNA degradation. Catalyzes the phosphorolysis of single-stranded polyribonucleotides processively in the 3'- to 5'-direction. This is Polyribonucleotide nucleotidyltransferase from Helicobacter hepaticus (strain ATCC 51449 / 3B1).